The following is a 451-amino-acid chain: MGRLFGTDGVRGRANADLTPELGLAVAVAAAHTLAEADRSHPPLAVVGRDTRASGEMLESAVVAGLTSAGANVVRVGVLPTPAVAFLTAEAKADIGVMLSASHNPMPDNGIKLFAAGGHKLPDEIEMKIEAAVEANTTTAWERPVGAGVGRVHDLLDGADHYVQHLVGTVPHRLDGIKVVVDCANGAAAEVAPAAYREAGAEVVAIHAEPNGLNINDECGSNHVAALRQAVVEHGAQLGIAHDGDADRCVAVTADGDEVDGDQVMAILALAMREAGTLTADTLVATVMSNLGLRIAMSREGIRLVETKVGDRYVLEELRASGLALGGEQSGHIVMPAHATTGDGVLTGLHLMSRMAGTGRPLAELAAVVSPLPQVLINVPVGDRTVGAAAPAVRAEVARAEAELGDAGRVLLRPSGTEPLVRVMVEAGTETTAREVAERIAEQVRTASPVS.

S102 (phosphoserine intermediate) is an active-site residue. S102, D243, D245, and D247 together coordinate Mg(2+). Position 102 is a phosphoserine (S102).

Belongs to the phosphohexose mutase family. The cofactor is Mg(2+). Activated by phosphorylation.

The enzyme catalyses alpha-D-glucosamine 1-phosphate = D-glucosamine 6-phosphate. Functionally, catalyzes the conversion of glucosamine-6-phosphate to glucosamine-1-phosphate. The chain is Phosphoglucosamine mutase from Salinispora tropica (strain ATCC BAA-916 / DSM 44818 / JCM 13857 / NBRC 105044 / CNB-440).